The chain runs to 578 residues: Proline--tRNA ligase (578 aa).

Belongs to the class-II aminoacyl-tRNA synthetase family. ProS type 1 subfamily. Homodimer.

The protein localises to the cytoplasm. The catalysed reaction is tRNA(Pro) + L-proline + ATP = L-prolyl-tRNA(Pro) + AMP + diphosphate. Catalyzes the attachment of proline to tRNA(Pro) in a two-step reaction: proline is first activated by ATP to form Pro-AMP and then transferred to the acceptor end of tRNA(Pro). As ProRS can inadvertently accommodate and process non-cognate amino acids such as alanine and cysteine, to avoid such errors it has two additional distinct editing activities against alanine. One activity is designated as 'pretransfer' editing and involves the tRNA(Pro)-independent hydrolysis of activated Ala-AMP. The other activity is designated 'posttransfer' editing and involves deacylation of mischarged Ala-tRNA(Pro). The misacylated Cys-tRNA(Pro) is not edited by ProRS. This Syntrophus aciditrophicus (strain SB) protein is Proline--tRNA ligase.